The sequence spans 263 residues: MEESGYESVLCVKPDVHVYRIPPRATNRGYRAAEWQLDQPSWSGRLRITAKGQMAYIKLEDRTSGELFAQAPVDQFPGTAVESVTDSSRYFVIRIEDGNGRRAFIGIGFGDRGDAFDFNVALQDHFKWVKQQCEFAKQAQNPDQGPKLDLGFKEGQTIKLNIANMKKKEGAAGNPRVRPASTGGLSLLPPPPGGKTSTLIPPPGEQLAVGGSLVQPAVAPSSGGAPVPWPQPNPATADIWGDFTKSTGSTSSQTQPGTGWVQF.

2 disordered regions span residues 166 to 194 (KKKE…PPGG) and 219 to 263 (APSS…WVQF). Position 181 is a phosphoserine (S181). 2 short sequence motifs (WXXF motif) span residues 240–243 (WGDF) and 260–263 (WVQF). Positions 246-263 (STGSTSSQTQPGTGWVQF) are enriched in low complexity.

The protein belongs to the NECAP family. Interacts with AP1G1 and AP2A1 components of the adapter protein complexes AP-1 and AP-2. Interacts with the GAE domain proteins GGA1, GGA2 and GGA3.

It is found in the cytoplasmic vesicle. Its subcellular location is the clathrin-coated vesicle membrane. The protein resides in the cell membrane. Functionally, involved in endocytosis. The polypeptide is Adaptin ear-binding coat-associated protein 2 (NECAP2) (Homo sapiens (Human)).